The chain runs to 293 residues: Small ribosomal subunit protein uS5 (293 aa).

The disordered stretch occupies residues 1–55; sequence MADDAGAAGGPGGPGGPGLGGRGGFRGGFGSGLRGRGRGRGRGRGRGRGARGGKA. Ala2 bears the N-acetylalanine mark. The span at 7–34 shows a compositional bias: gly residues; the sequence is AAGGPGGPGGPGLGGRGGFRGGFGSGLR. 14 consecutive repeat copies span residues 9 to 11, 12 to 14, 15 to 17, 22 to 25, 26 to 29, 34 to 35, 36 to 37, 38 to 39, 40 to 41, 42 to 43, 44 to 45, 46 to 47, 48 to 49, and 51 to 52. Residues 9–17 form a 3 X 3 AA tandem repeats of G-G-P region; the sequence is GGPGGPGGP. The tract at residues 22–29 is 2 X 4 AA tandem repeats of R-G-G-F; that stretch reads RGGFRGGF. Positions 34 to 52 are 9 X 2 AA tandem repeats of R-G; that stretch reads RGRGRGRGRGRGRGRGARG. Positions 35-51 are enriched in basic residues; sequence GRGRGRGRGRGRGRGAR. Glycyl lysine isopeptide (Lys-Gly) (interchain with G-Cter in ubiquitin) cross-links involve residues Lys54 and Lys58. The region spanning 102-165 is the S5 DRBM domain; sequence LKDEVLKIMP…ILAKLSIVPV (64 aa). Thr252 carries the phosphothreonine modification. At Lys263 the chain carries N6-acetyllysine. At Ser264 the chain carries Phosphoserine. At Thr270 the chain carries Phosphothreonine. Residue Lys275 is modified to N6-acetyllysine; alternate. A Glycyl lysine isopeptide (Lys-Gly) (interchain with G-Cter in SUMO1); alternate cross-link involves residue Lys275. Lys275 is covalently cross-linked (Glycyl lysine isopeptide (Lys-Gly) (interchain with G-Cter in SUMO2); alternate). Lys275 is covalently cross-linked (Glycyl lysine isopeptide (Lys-Gly) (interchain with G-Cter in ubiquitin); alternate). Position 281 is a phosphoserine (Ser281).

This sequence belongs to the universal ribosomal protein uS5 family. Component of the small ribosomal subunit. Interacts with zinc finger protein ZNF277 (via zinc-finger domains); the interaction is direct; the interaction is extra-ribosomal. Interaction with ZNF277 competes with the binding of RPS2 to protein arginine methyltransferase PRMT3. Citrullinated by PADI4 in the Arg/Gly-rich region. Post-translationally, asymmetric arginine dimethylation by PRMT3 occurs at multiple sites in the Arg/Gly-rich region. In terms of processing, monoubiquitinated at Lys-54 and Lys-58 by RNF10 when a ribosome has stalled during translation, leading to its degradation by the proteasome. Deubiquitinated at Lys-54 and Lys-58 by USP10, preventing degradation by the proteasome and promoting 40S ribosome subunit recycling following ribosome dissociation.

Its subcellular location is the cytoplasm. It is found in the nucleus. It localises to the nucleolus. Component of the ribosome, a large ribonucleoprotein complex responsible for the synthesis of proteins in the cell. The small ribosomal subunit (SSU) binds messenger RNAs (mRNAs) and translates the encoded message by selecting cognate aminoacyl-transfer RNA (tRNA) molecules. The large subunit (LSU) contains the ribosomal catalytic site termed the peptidyl transferase center (PTC), which catalyzes the formation of peptide bonds, thereby polymerizing the amino acids delivered by tRNAs into a polypeptide chain. The nascent polypeptides leave the ribosome through a tunnel in the LSU and interact with protein factors that function in enzymatic processing, targeting, and the membrane insertion of nascent chains at the exit of the ribosomal tunnel. Plays a role in the assembly and function of the 40S ribosomal subunit. Mutations in this protein affects the control of translational fidelity. Involved in nucleolar processing of pre-18S ribosomal RNA and ribosome assembly. This Rattus norvegicus (Rat) protein is Small ribosomal subunit protein uS5 (Rps2).